The chain runs to 399 residues: MLRLGRSAASEVSSIRNSLQLQLEQRGARPMQCAYQTQSHSNPEGAKRGRSPMSLAVMGAAALSVGLELQTDGIAQARAAMEPGTQLQRHKWQLFDQIGAGAFGVVRLGMHEESGEVAAVKIVPLENPNDQRSYPALEREIAALKLVKALGGHNSIVDLRDVYVEGRKLFLVTELARGGELFEQIVAYGSFPELKARDVAREMASALSFMHRHGLVHKDVKPENILMSARVVDHNSGVYRKSNRHESSSLVKLADFGSAGPASVNTNLEDIGTAAYLPPEVLNSGMCTSACDMWALGCVLYIMLSGSHPFDLDGMSADSVVEHRVKSEPVTFDFSAWDNVSPHAKDLISKLLVKDPTLRLTADQMLQHPWMNASAEAAAAGLRRPSPLLAGQPIPRGPA.

Positions 30–50 (PMQCAYQTQSHSNPEGAKRGR) are disordered. The Protein kinase domain occupies 92 to 371 (WQLFDQIGAG…ADQMLQHPWM (280 aa)). Residues 98-106 (IGAGAFGVV) and lysine 121 each bind ATP. The Proton acceptor role is filled by aspartate 219.

It belongs to the protein kinase superfamily. CAMK Ser/Thr protein kinase family. In terms of assembly, interacts with BZP1.

The enzyme catalyses L-seryl-[protein] + ATP = O-phospho-L-seryl-[protein] + ADP + H(+). It carries out the reaction L-threonyl-[protein] + ATP = O-phospho-L-threonyl-[protein] + ADP + H(+). In terms of biological role, may regulate an early stage of the zoospore pathway. The sequence is that of Serine/threonine-protein kinase PKZ1 from Phytophthora infestans (Potato late blight agent).